The following is a 680-amino-acid chain: MIDRYKHQQLQIGLVSPQQIITWAEKILPNGEIVGEVTKPYTFHYKTNKPEKDGLFCERIFGPIKSGICACGNYRVIGNEKEDPKFCEQCGVEFVDSRVRRYQMGYIKLACPVTHVWYLKRLPSYIANLLDKPLKELEGLVYCDFSFARPVVKNPTFLRLRGSFEYEIQSWKYSIPLFFTTQGFDTFRNREISTGASAIREQLADLDLRLIIDCSLLEWKELGEEGPAGNEWEDRKMGRRKSFLVRRMELAKHFIRTNVEPERMVLCLLPVLPPELRPIIQIDGGKLMSSDINELYRRVIYRNNTLTDLLTTSRSTPGELVMCQEKLVQEAVDTLLDNGIRGQPTRDGHNKIYKSFSDVIEGKEGRFRETLLGKRVDYSGRSVIVVGPSLSLHRCGLPREIAIELFHTFVIRGLIRQHIASNIGVAKSKIREKAPIVWEILQEVMQGHPVLLNRAPTLHRLGIQAFQPILVEGRAICLHPLVCKGFNADFDGDQMAVHIPLSLEAQAEARLLMFSHMNLLSPAIGDPISVPTQDMLMGLYVLTIGNRRGICANRYNPWNHRNSQNEKIDDNNHTYTKEPYFCSSYDALGAFRQKRINLDSPLWLRWRLDQRVIAPREVPIEVQCESFGTYHEIYGHYLIVRNVNKKIFCIDIRTTVGLISFYREIEEAIQGFCRACSYST.

The Zn(2+) site is built by C69, C71, C87, and C90. Positions 489, 491, and 493 each coordinate Mg(2+).

This sequence belongs to the RNA polymerase beta' chain family. RpoC1 subfamily. As to quaternary structure, in plastids the minimal PEP RNA polymerase catalytic core is composed of four subunits: alpha, beta, beta', and beta''. When a (nuclear-encoded) sigma factor is associated with the core the holoenzyme is formed, which can initiate transcription. Mg(2+) serves as cofactor. The cofactor is Zn(2+).

It is found in the plastid. The protein localises to the chloroplast. It carries out the reaction RNA(n) + a ribonucleoside 5'-triphosphate = RNA(n+1) + diphosphate. Its function is as follows. DNA-dependent RNA polymerase catalyzes the transcription of DNA into RNA using the four ribonucleoside triphosphates as substrates. The polypeptide is DNA-directed RNA polymerase subunit beta' (Ranunculus macranthus (Large buttercup)).